The following is a 211-amino-acid chain: tRNA (pseudouridine(54)-N(1))-methyltransferase (211 aa).

S-adenosyl-L-methionine is bound by residues Leu128, Gly150, and Cys183.

The protein belongs to the methyltransferase superfamily. TrmY family. Homodimer.

The protein resides in the cytoplasm. It catalyses the reaction pseudouridine(54) in tRNA + S-adenosyl-L-methionine = N(1)-methylpseudouridine(54) in tRNA + S-adenosyl-L-homocysteine + H(+). Functionally, specifically catalyzes the N1-methylation of pseudouridine at position 54 (Psi54) in tRNAs. This Methanosarcina acetivorans (strain ATCC 35395 / DSM 2834 / JCM 12185 / C2A) protein is tRNA (pseudouridine(54)-N(1))-methyltransferase.